The chain runs to 144 residues: Large ribosomal subunit protein uL13 (144 aa).

Belongs to the universal ribosomal protein uL13 family. As to quaternary structure, part of the 50S ribosomal subunit.

Functionally, this protein is one of the early assembly proteins of the 50S ribosomal subunit, although it is not seen to bind rRNA by itself. It is important during the early stages of 50S assembly. This chain is Large ribosomal subunit protein uL13, found in Clostridium acetobutylicum (strain ATCC 824 / DSM 792 / JCM 1419 / IAM 19013 / LMG 5710 / NBRC 13948 / NRRL B-527 / VKM B-1787 / 2291 / W).